Reading from the N-terminus, the 591-residue chain is Aspartate--tRNA(Asp/Asn) ligase (591 aa).

Glutamate 176 is an L-aspartate binding site. The segment at 200-203 (QLFK) is aspartate. Arginine 222 provides a ligand contact to L-aspartate. Residues 222-224 (RDE) and glutamine 231 contribute to the ATP site. Histidine 450 contributes to the L-aspartate binding site. Position 484 (glutamate 484) interacts with ATP. Arginine 491 contacts L-aspartate. 536 to 539 (GLDR) is an ATP binding site.

The protein belongs to the class-II aminoacyl-tRNA synthetase family. Type 1 subfamily. Homodimer.

Its subcellular location is the cytoplasm. The enzyme catalyses tRNA(Asx) + L-aspartate + ATP = L-aspartyl-tRNA(Asx) + AMP + diphosphate. Aspartyl-tRNA synthetase with relaxed tRNA specificity since it is able to aspartylate not only its cognate tRNA(Asp) but also tRNA(Asn). Reaction proceeds in two steps: L-aspartate is first activated by ATP to form Asp-AMP and then transferred to the acceptor end of tRNA(Asp/Asn). This is Aspartate--tRNA(Asp/Asn) ligase from Bacillus cereus (strain ATCC 14579 / DSM 31 / CCUG 7414 / JCM 2152 / NBRC 15305 / NCIMB 9373 / NCTC 2599 / NRRL B-3711).